The chain runs to 466 residues: Phage-like element PBSX protein XkdK (466 aa).

The protein belongs to the myoviridae tail sheath protein family.

The sequence is that of Phage-like element PBSX protein XkdK (xkdK) from Bacillus subtilis (strain 168).